The following is a 521-amino-acid chain: Chromaffin granule amine transporter (521 aa).

Residues 1-21 (MLQVVLGAPQRLLKEGRQSRK) lie on the Cytoplasmic side of the membrane. Residues 22-42 (LVLVVVFVALLLDNMLLTVVV) form a helical membrane-spanning segment. Topologically, residues 43-135 (PIVPTFLYAT…IEFLEEENVR (93 aa)) are lumenal, vesicle. N-linked (GlcNAc...) asparagine glycans are attached at residues Asn-58, Asn-87, and Asn-104. Residues 136 to 155 (IGILFASKALMQLLVNPFVG) traverse the membrane as a helical segment. The Cytoplasmic segment spans residues 156–164 (PLTNRIGYH). The helical transmembrane segment at 165–185 (IPMFVGFMIMFLSTLMFAFSG) threads the bilayer. At 186 to 194 (TYALLFVAR) the chain is on the lumenal, vesicle side. A helical membrane pass occupies residues 195 to 215 (TLQGIGSSFSSVAGLGMLASV). Over 216–224 (YTDNYERGR) the chain is Cytoplasmic. The helical transmembrane segment at 225 to 247 (AMGIALGGLALGLLVGAPFGSVM) threads the bilayer. Residues 248-253 (YEFVGK) are Lumenal, vesicle-facing. Residues 254-276 (SSPFLILAFLALLDGALQLCILW) traverse the membrane as a helical segment. At 277–296 (PSKVSPESAMGTSLLTLLKD) the chain is on the cytoplasmic side. Residues 297–316 (PYILVAAGSICLANMGVAIL) traverse the membrane as a helical segment. The Lumenal, vesicle portion of the chain corresponds to 317-332 (EPTLPIWMMQTMCSPE). Residues 333 to 357 (WQLGLAFLPASVAYLIGTNLFGVLA) form a helical membrane-spanning segment. Residues 358–362 (NKMGR) are Cytoplasmic-facing. Residues 363–383 (WLCSLVGMVAVGISLLCVPLA) form a helical membrane-spanning segment. Residues 384-394 (HNIFGLIGPNA) lie on the Lumenal, vesicle side of the membrane. A helical transmembrane segment spans residues 395–415 (GLGFAIGMVDSSLMPIMGYLV). Over 416-419 (DLRH) the chain is Cytoplasmic. A helical membrane pass occupies residues 420–440 (TSVYGSVYAIADVAFCVGFAI). At 441–445 (GPSTG) the chain is on the lumenal, vesicle side. A helical transmembrane segment spans residues 446–467 (GVIVQVIGFPWLMVIIGTINII). The Cytoplasmic portion of the chain corresponds to 468 to 521 (YAPLCCFLQNPPAKEEKRAILSQECPTETQMYTFQKPTKAFPLGENSDDPSSGE).

The protein belongs to the major facilitator superfamily. Vesicular transporter family. In terms of tissue distribution, adrenal gland.

Its subcellular location is the cytoplasmic vesicle. The protein resides in the secretory vesicle membrane. It is found in the secretory vesicle. The protein localises to the synaptic vesicle membrane. It catalyses the reaction serotonin(in) + 2 H(+)(out) = serotonin(out) + 2 H(+)(in). The catalysed reaction is (R)-noradrenaline(in) + 2 H(+)(out) = (R)-noradrenaline(out) + 2 H(+)(in). The enzyme catalyses dopamine(in) + 2 H(+)(out) = dopamine(out) + 2 H(+)(in). Its activity is regulated as follows. Strongly inhibited by reserpine, ketanserin and methamphetamine. Also inhibited weakly by tetrabenazine. In terms of biological role, electrogenic antiporter that exchanges one cationic monoamine with two intravesicular protons across the membrane of secretory and synaptic vesicles. Uses the electrochemical proton gradient established by the V-type proton-pump ATPase to accumulate high concentrations of monoamines inside the vesicles prior to their release via exocytosis. Transports catecholamines and indolamines with higher affinity for serotonin. Regulates the transvesicular monoaminergic gradient that determines the quantal size. Mediates presynaptic monoaminergic vesicle transport in the amygdala and prefrontal brain regions related with emotion processing in response to environmental stimuli. This chain is Chromaffin granule amine transporter (Slc18a1), found in Rattus norvegicus (Rat).